We begin with the raw amino-acid sequence, 499 residues long: Bifunctional NAD(P)H-hydrate repair enzyme Nnr (499 aa).

Positions 1 to 217 (MFITSKEMRR…PEIAERICGP (217 aa)) are NAD(P)H-hydrate epimerase. In terms of domain architecture, YjeF N-terminal spans 8–213 (MRRIELNSRW…NAGIPEIAER (206 aa)). The NADPHX 1; for epimerase activity stretch occupies residues 54 to 58 (GNGGD). N55 and D124 together coordinate K(+). The segment at 128-134 (GFGIRGR) is NADPHX 1; for epimerase activity. D160 provides a ligand contact to (6S)-NADPHX. Position 163 (T163) interacts with K(+). The 269-residue stretch at 217-485 (PGDLITSDIW…EYVPKVLRNP (269 aa)) folds into the YjeF C-terminal domain. Residues 217–499 (PGDLITSDIW…PEAVTEVRRD (283 aa)) form an ADP-dependent (S)-NAD(P)H-hydrate dehydratase region. G314 contributes to the (6S)-NADPHX binding site. The NADPHX 2; for dehydratase activity stretch occupies residues 360–366 (HAGEFRR). ADP contacts are provided by residues 397-401 (KGRVD) and 417-426 (TPAMTVGGTG). (6S)-NADPHX is bound at residue D427.

It in the N-terminal section; belongs to the NnrE/AIBP family. In the C-terminal section; belongs to the NnrD/CARKD family. The cofactor is K(+).

It carries out the reaction (6S)-NADHX + ADP = AMP + phosphate + NADH + H(+). The enzyme catalyses (6S)-NADPHX + ADP = AMP + phosphate + NADPH + H(+). The catalysed reaction is (6R)-NADHX = (6S)-NADHX. It catalyses the reaction (6R)-NADPHX = (6S)-NADPHX. Functionally, bifunctional enzyme that catalyzes the epimerization of the S- and R-forms of NAD(P)HX and the dehydration of the S-form of NAD(P)HX at the expense of ADP, which is converted to AMP. This allows the repair of both epimers of NAD(P)HX, a damaged form of NAD(P)H that is a result of enzymatic or heat-dependent hydration. In Methanopyrus kandleri (strain AV19 / DSM 6324 / JCM 9639 / NBRC 100938), this protein is Bifunctional NAD(P)H-hydrate repair enzyme Nnr (nnr).